The sequence spans 342 residues: Nicotinate-nucleotide--dimethylbenzimidazole phosphoribosyltransferase (342 aa).

E311 (proton acceptor) is an active-site residue.

Belongs to the CobT family.

It catalyses the reaction 5,6-dimethylbenzimidazole + nicotinate beta-D-ribonucleotide = alpha-ribazole 5'-phosphate + nicotinate + H(+). The protein operates within nucleoside biosynthesis; alpha-ribazole biosynthesis; alpha-ribazole from 5,6-dimethylbenzimidazole: step 1/2. Functionally, catalyzes the synthesis of alpha-ribazole-5'-phosphate from nicotinate mononucleotide (NAMN) and 5,6-dimethylbenzimidazole (DMB). The protein is Nicotinate-nucleotide--dimethylbenzimidazole phosphoribosyltransferase of Photobacterium profundum (strain SS9).